The chain runs to 500 residues: Cytochrome P450 2D28 (500 aa).

Cys-446 provides a ligand contact to heme.

Belongs to the cytochrome P450 family. Heme is required as a cofactor.

The protein localises to the endoplasmic reticulum membrane. The protein resides in the microsome membrane. The sequence is that of Cytochrome P450 2D28 (CYP2D28A) from Mesocricetus auratus (Golden hamster).